A 63-amino-acid chain; its full sequence is Ferredoxin (63 aa).

Residues 2–29 (KVTVDQDLCIACGTCIDLCPSVFDWDDE) enclose the 4Fe-4S ferredoxin-type domain. 4 residues coordinate [4Fe-4S] cluster: C10, C13, C16, and C55.

The cofactor is [4Fe-4S] cluster.

Its function is as follows. Ferredoxins are iron-sulfur proteins that transfer electrons in a wide variety of metabolic reactions. The polypeptide is Ferredoxin (Moorella thermoacetica (Clostridium thermoaceticum)).